We begin with the raw amino-acid sequence, 25 residues long: Endoglucanase 1 (25 aa).

The interval Tyr-1–Lys-25 is disordered. The span at Gln-10–Lys-25 shows a compositional bias: polar residues.

The enzyme catalyses Endohydrolysis of (1-&gt;4)-beta-D-glucosidic linkages in cellulose, lichenin and cereal beta-D-glucans.. Functionally, this enzyme hydrolyzes cellotetraose, cellopentaose, and cellohexaose to cellobiose and cellotriose but does not hydrolyze cellobiose or cellotriose. This Ruminiclostridium josui (Clostridium josui) protein is Endoglucanase 1.